Reading from the N-terminus, the 648-residue chain is Phosphatidylinositol polyphosphate 5-phosphatase type IV (648 aa).

The tract at residues 1-64 (MPSKSACLRH…PLSMPAKPSN (64 aa)) is disordered. The segment covering 36–54 (TSASLPAADSQSSQTNSMP) has biased composition (polar residues). A run of 2 repeats spans residues 59 to 62 (PAKP) and 76 to 79 (PQPP). Residues 59 to 243 (PAKPSNQNLQ…AHSNLGPSRP (185 aa)) are 4 X 4 AA repeats of P-X-X-P. Positions 99 to 158 (RFRGSQEDLTVQNGASPCRGSLQDSVAQSPAYSRPLPCLSTSLQEIPKPRRATGSEGGSP) are disordered. Residue Ser103 is modified to Phosphoserine. Polar residues predominate over residues 120-129 (LQDSVAQSPA). Copy 3 of the repeat occupies 147–150 (PRRA). Thr197 carries the phosphothreonine modification. The stretch at 240-243 (PSRP) is repeat 4. Residues Ser245 and Ser260 each carry the phosphoserine modification. At Cys645 the chain carries Cysteine methyl ester. Cys645 carries the S-farnesyl cysteine lipid modification. The propeptide at 646–648 (TVS) is removed in mature form.

The protein belongs to the inositol 1,4,5-trisphosphate 5-phosphatase type IV family. In terms of assembly, interacts (when prenylated) with PDE6D; this is important for normal location in cilia.

Its subcellular location is the cytoplasm. It localises to the cytoskeleton. It is found in the cilium axoneme. The protein localises to the golgi apparatus. The protein resides in the golgi stack membrane. Its subcellular location is the cell membrane. It localises to the cell projection. It is found in the ruffle. The protein localises to the nucleus. The catalysed reaction is a 1,2-diacyl-sn-glycero-3-phospho-(1D-myo-inositol-4,5-bisphosphate) + H2O = a 1,2-diacyl-sn-glycero-3-phospho-(1D-myo-inositol 4-phosphate) + phosphate. It carries out the reaction a 1,2-diacyl-sn-glycero-3-phospho-(1D-myo-inositol-3,4,5-trisphosphate) + H2O = a 1,2-diacyl-sn-glycero-3-phospho-(1D-myo-inositol-3,4-bisphosphate) + phosphate. It catalyses the reaction a 1,2-diacyl-sn-glycero-3-phospho-(1D-myo-inositol-3,5-bisphosphate) + H2O = a 1,2-diacyl-sn-glycero-3-phospho-(1D-myo-inositol-3-phosphate) + phosphate. Phosphatidylinositol (PtdIns) phosphatase that specifically hydrolyzes the 5-phosphate of phosphatidylinositol-3,4,5-trisphosphate (PtdIns(3,4,5)P3), phosphatidylinositol 4,5-bisphosphate PtdIns (4,5)P2 and phosphatidylinositol 3,5-bisphosphate (PtdIns(3,5)P2). Specific for lipid substrates, inactive towards water soluble inositol phosphates. Plays an essential role in the primary cilium by controlling ciliary growth and phosphoinositide 3-kinase (PI3K) signaling and stability. The protein is Phosphatidylinositol polyphosphate 5-phosphatase type IV (Inpp5e) of Rattus norvegicus (Rat).